The sequence spans 530 residues: Protein P80 (530 aa).

Residues 1–22 form the signal peptide; that stretch reads MKVISGLLFFILISCSLFLVQG. The chain crosses the membrane as a helical span at residues 491 to 511; sequence MLVAMTFNVALFFAVIAGVLV.

The protein belongs to the SLC31A transporter family.

Its subcellular location is the late endosome membrane. The chain is Protein P80 (p80) from Dictyostelium discoideum (Social amoeba).